Here is a 169-residue protein sequence, read N- to C-terminus: S-ribosylhomocysteine lyase (169 aa).

The Fe cation site is built by His54, His58, and Cys128.

This sequence belongs to the LuxS family. In terms of assembly, homodimer. Fe cation is required as a cofactor.

The catalysed reaction is S-(5-deoxy-D-ribos-5-yl)-L-homocysteine = (S)-4,5-dihydroxypentane-2,3-dione + L-homocysteine. Functionally, involved in the synthesis of autoinducer 2 (AI-2) which is secreted by bacteria and is used to communicate both the cell density and the metabolic potential of the environment. The regulation of gene expression in response to changes in cell density is called quorum sensing. Catalyzes the transformation of S-ribosylhomocysteine (RHC) to homocysteine (HC) and 4,5-dihydroxy-2,3-pentadione (DPD). The chain is S-ribosylhomocysteine lyase from Shewanella sediminis (strain HAW-EB3).